The chain runs to 344 residues: L-rhamnose-proton symporter (344 aa).

The next 10 membrane-spanning stretches (helical) occupy residues 4-24, 38-58, 68-88, 101-121, 137-157, 175-195, 214-234, 259-279, 290-310, and 323-343; these read AITMGIFWHLIGAASAACFYA, WSVGGIVSWIILPWAISALLL, FSLSTLLPVFLFGAMWGIGNI, MGIGIAIGITLIVGTLMTPII, TLLGVLVALIGVGIVTRAGQL, LVLAVMCGIFSAGMSFAMNAA, LPSYVVIMGGGAIINLGFCFI, VLLSVLGGLMWYLQFFFYAWG, ISWMLHMSFYVLCGGIVGLVL, and VLSLGCVVIIVAANIVGIGMA.

The protein belongs to the L-rhamnose transporter (TC 2.A.7.6) family.

Its subcellular location is the cell inner membrane. The catalysed reaction is L-rhamnopyranose(in) + H(+)(in) = L-rhamnopyranose(out) + H(+)(out). Functionally, uptake of L-rhamnose across the cytoplasmic membrane with the concomitant transport of protons into the cell (symport system). The chain is L-rhamnose-proton symporter from Escherichia coli O1:K1 / APEC.